The sequence spans 763 residues: DNA polymerase 3 (763 aa).

It belongs to the DNA polymerase type-B family.

It carries out the reaction DNA(n) + a 2'-deoxyribonucleoside 5'-triphosphate = DNA(n+1) + diphosphate. The sequence is that of DNA polymerase 3 (dpo3) from Saccharolobus shibatae (strain ATCC 51178 / DSM 5389 / JCM 8931 / NBRC 15437 / B12) (Sulfolobus shibatae).